The primary structure comprises 708 residues: B-cell lymphoma 6 protein homolog (708 aa).

Residues 32 to 99 enclose the BTB domain; that stretch reads TDVVIIVNRE…MYTSRLNLRE (68 aa). A compositionally biased stretch (basic and acidic residues) spans 303-317; sequence AKEEERTSSEDEISQ. 2 disordered regions span residues 303–371 and 431–470; these read AKEE…KSPT and PTKM…QSPL. Composition is skewed to polar residues over residues 333–370 and 431–454; these read SPQS…TKSP and PTKM…NIVN. C2H2-type zinc fingers lie at residues 520–543, 548–570, 576–598, 604–626, 632–654, and 660–683; these read FFCN…LQVH, YKCD…KTVH, YRCN…TRIH, YKCE…VLIH, YPCE…LRIH, and YHCE…RQKH.

The protein localises to the nucleus. Its function is as follows. Transcriptional repressor mainly required for germinal center (GC) formation and antibody affinity maturation which has different mechanisms of action specific to the lineage and biological functions. Forms complexes with different corepressors and histone deacetylases to repress the transcriptional expression of different subsets of target genes. Represses its target genes by binding directly to the DNA sequence 5'-TTCCTAGAA-3' (BCL6-binding site) or indirectly by repressing the transcriptional activity of transcription factors. In GC B-cells, represses genes that function in differentiation, inflammation, apoptosis and cell cycle control, also autoregulates its transcriptional expression and up-regulates, indirectly, the expression of some genes important for GC reactions, such as AICDA, through the repression of microRNAs expression. An important function is to allow GC B-cells to proliferate very rapidly in response to T-cell dependent antigens and tolerate the physiological DNA breaks required for immunglobulin class switch recombination and somatic hypermutation without inducing a p53/TP53-dependent apoptotic response. In follicular helper CD4(+) T-cells (T(FH) cells), promotes the expression of T(FH)-related genes but inhibits the differentiation of T(H)1, T(H)2 and T(H)17 cells. Also required for the establishment and maintenance of immunological memory for both T- and B-cells. Suppresses macrophage proliferation through competition with STAT5 for STAT-binding motifs binding on certain target genes, such as CCL2 and CCND2. In response to genotoxic stress, controls cell cycle arrest in GC B-cells in both p53/TP53-dependedent and -independent manners. Besides, also controls neurogenesis through the alteration of the composition of NOTCH-dependent transcriptional complexes at selective NOTCH targets, such as HES5, including the recruitment of the deacetylase SIRT1 and resulting in an epigenetic silencing leading to neuronal differentiation. The protein is B-cell lymphoma 6 protein homolog of Gallus gallus (Chicken).